The primary structure comprises 746 residues: GTPase-activating protein GYP7 (746 aa).

Phosphoserine occurs at positions 265 and 339. Residues 385–633 (LENDSLRGKV…HIWENFWTFY (249 aa)) form the Rab-GAP TBC domain. Positions 470–505 (TIDGLPPPPQQLPANENNSTSPESANDESDDADDGV) are disordered. Over residues 481–491 (LPANENNSTSP) the composition is skewed to polar residues.

Its subcellular location is the cytoplasm. GTPase-activating protein (GAP) that most effectively accelerates the intrinsic GTPase activity of Ypt/Rab-type GTPase YPT7 involved in vacuole docking and fusion. It is also active, but to a lesser extent, on YPT31, YPT32, YPT1, YPT6 and SEC4. Provides a catalytic arginine (arginine finger) in trans to accelerate the GTP hydrolysis rate of the substrate GTPase. In Saccharomyces cerevisiae (strain ATCC 204508 / S288c) (Baker's yeast), this protein is GTPase-activating protein GYP7 (GYP7).